The primary structure comprises 699 residues: Envelope glycoprotein G (699 aa).

A signal peptide spans 1 to 22; that stretch reads MHAIAPRLLLLFVLSGLPGTRG. At 23–650 the chain is on the virion surface side; that stretch reads GSGVPGPINP…WFLTASPALD (628 aa). N-linked (GlcNAc...) asparagine; by host glycans are attached at residues N104 and N163. Disordered regions lie at residues 302–390 and 403–632; these read PGAL…TTPP and TPEE…PSGP. Residues 323-336 show a composition bias toward basic and acidic residues; that stretch reads LRTDPEGVDPDVRA. Residues 348–359 show a composition bias toward polar residues; that stretch reads EDTSSDSPTSAP. Composition is skewed to low complexity over residues 376 to 390 and 403 to 447; these read DPSA…TTPP and TPEE…AKTP. A glycan (N-linked (GlcNAc...) asparagine; by host) is linked at N437. Pro residues-rich tracts occupy residues 448–459 and 467–482; these read PTTPAPTTPPPT and PTTP…PATP. Residues 483 to 531 show a composition bias toward low complexity; that stretch reads GPVGASAAPTADSPLTASPPATAPGPSAANVSVAATTATPGTRGTARTP. N-linked (GlcNAc...) asparagine; by host glycosylation is present at N512. Over residues 544–554 the composition is skewed to pro residues; the sequence is DAPPGSPAPPP. The segment covering 562-578 has biased composition (acidic residues); the sequence is EEFEGAGDGEPPEDDDS. The segment covering 589 to 605 has biased composition (pro residues); the sequence is PNKPPPARPGPIRPTLP. Residues 651 to 671 form a helical membrane-spanning segment; it reads ILFIISTTIHTAAFVCLVALA. The Intravirion segment spans residues 672-699; it reads AQLWRGRAGRRRYAHPSVRYVCLPPERD.

This sequence belongs to the alphaherpesvirinae glycoprotein G family.

It localises to the virion membrane. In terms of biological role, chemokine-binding protein that inhibits neutrophils' chemotaxis. The polypeptide is Envelope glycoprotein G (gG) (Human herpesvirus 2 (strain HG52) (HHV-2)).